The following is a 380-amino-acid chain: Succinyl-diaminopimelate desuccinylase (380 aa).

Residue His68 coordinates Zn(2+). Residue Asp70 is part of the active site. Asp101 contacts Zn(2+). Glu135 serves as the catalytic Proton acceptor. Residues Glu136, Glu164, and His350 each contribute to the Zn(2+) site.

This sequence belongs to the peptidase M20A family. DapE subfamily. As to quaternary structure, homodimer. It depends on Zn(2+) as a cofactor. Requires Co(2+) as cofactor.

The enzyme catalyses N-succinyl-(2S,6S)-2,6-diaminopimelate + H2O = (2S,6S)-2,6-diaminopimelate + succinate. The protein operates within amino-acid biosynthesis; L-lysine biosynthesis via DAP pathway; LL-2,6-diaminopimelate from (S)-tetrahydrodipicolinate (succinylase route): step 3/3. Functionally, catalyzes the hydrolysis of N-succinyl-L,L-diaminopimelic acid (SDAP), forming succinate and LL-2,6-diaminopimelate (DAP), an intermediate involved in the bacterial biosynthesis of lysine and meso-diaminopimelic acid, an essential component of bacterial cell walls. This chain is Succinyl-diaminopimelate desuccinylase, found in Tolumonas auensis (strain DSM 9187 / NBRC 110442 / TA 4).